The primary structure comprises 210 residues: Calcium-activated potassium channel subunit beta-4 (210 aa).

Residues M1–R19 lie on the Cytoplasmic side of the membrane. A helical membrane pass occupies residues L20 to L40. The Extracellular segment spans residues S41–E167. 2 N-linked (GlcNAc...) asparagine glycosylation sites follow: N53 and N90. The helical transmembrane segment at I168–V188 threads the bilayer. Residues V189–S210 are Cytoplasmic-facing.

This sequence belongs to the KCNMB (TC 8.A.14.1) family. KCNMB4 subfamily. In terms of assembly, interacts with KCNMA1 tetramer. There are probably 4 molecules of KCMNB4 per KCNMA1 tetramer. Interacts with FMR1 (via N-terminus). Post-translationally, phosphorylated. Phosphorylation modulates its effect on KCNMA1 activation kinetics. In terms of processing, N-glycosylated. A highly glycosylated form is promoted by KCNMA1. Glycosylation, which is not required for the interaction with KCNMA1 and subcellular location, increases protection against charybdotoxin.

The protein localises to the membrane. In terms of biological role, regulatory subunit of the calcium activated potassium KCNMA1 (maxiK) channel. Modulates the calcium sensitivity and gating kinetics of KCNMA1, thereby contributing to KCNMA1 channel diversity. Decreases the gating kinetics and calcium sensitivity of the KCNMA1 channel, but with fast deactivation kinetics. May decrease KCNMA1 channel openings at low calcium concentrations but increases channel openings at high calcium concentrations. Makes KCNMA1 channel resistant to 100 nM charybdotoxin (CTX) toxin concentrations. In Rattus norvegicus (Rat), this protein is Calcium-activated potassium channel subunit beta-4 (Kcnmb4).